A 362-amino-acid polypeptide reads, in one-letter code: EARP-interacting protein 1 (362 aa).

WD repeat units follow at residues 61-108 (HPAG…RTLE), 206-246 (AHIH…SALT), 250-290 (PHAH…SEQQ), and 319-359 (EHED…KYAL).

The protein belongs to the WD repeat EIPR1 family. As to expression, expressed in the hypodermis and the pharynx.

The protein localises to the cytoplasm. Plays a role in the trafficking of cargo to dense-core vesicles, probably through association with the endosome-associated recycling protein (EARP) complex. Important for neuronal function. The chain is EARP-interacting protein 1 from Caenorhabditis elegans.